We begin with the raw amino-acid sequence, 707 residues long: Vicilin-like seed storage protein At2g18540 (707 aa).

Positions 1–24 are cleaved as a signal peptide; it reads MSRFRILPLSIFLCFVSLFFCTES. Residues 42 to 185 enclose the Cupin type-1 1 domain; it reads PLLVKKDQRT…AFAVPEDILR (144 aa). Asparagine 60, asparagine 203, asparagine 285, asparagine 356, asparagine 396, and asparagine 399 each carry an N-linked (GlcNAc...) asparagine glycan. The Cupin type-1 2 domain maps to 247 to 403; that stretch reads FNVFEEDPDF…SFNLSNETIK (157 aa). Positions 439 to 696 are enriched in basic and acidic residues; sequence EEEEIERRRK…KKEEEEEKRR (258 aa). The interval 439–707 is disordered; that stretch reads EEEEIERRRK…PPQPKPPEEI (269 aa). The span at 698-707 shows a compositional bias: pro residues; the sequence is PPQPKPPEEI.

This sequence belongs to the 7S seed storage protein family.

Functionally, seed storage protein. This Arabidopsis thaliana (Mouse-ear cress) protein is Vicilin-like seed storage protein At2g18540.